A 358-amino-acid polypeptide reads, in one-letter code: Peptide chain release factor 2 (358 aa).

Q242 is subject to N5-methylglutamine.

Belongs to the prokaryotic/mitochondrial release factor family. Post-translationally, methylated by PrmC. Methylation increases the termination efficiency of RF2.

Its subcellular location is the cytoplasm. Peptide chain release factor 2 directs the termination of translation in response to the peptide chain termination codons UGA and UAA. The chain is Peptide chain release factor 2 (prfB) from Borreliella burgdorferi (strain ATCC 35210 / DSM 4680 / CIP 102532 / B31) (Borrelia burgdorferi).